Here is a 259-residue protein sequence, read N- to C-terminus: tRNA pseudouridine synthase A (259 aa).

Residue Asp52 is the Nucleophile of the active site. Tyr113 is a binding site for substrate.

The protein belongs to the tRNA pseudouridine synthase TruA family. In terms of assembly, homodimer.

It carries out the reaction uridine(38/39/40) in tRNA = pseudouridine(38/39/40) in tRNA. In terms of biological role, formation of pseudouridine at positions 38, 39 and 40 in the anticodon stem and loop of transfer RNAs. The protein is tRNA pseudouridine synthase A of Allorhizobium ampelinum (strain ATCC BAA-846 / DSM 112012 / S4) (Agrobacterium vitis (strain S4)).